We begin with the raw amino-acid sequence, 214 residues long: Adenylate kinase (214 aa).

10 to 15 (GAGKGT) is a binding site for ATP. Positions 30–59 (STGDMLRSAVKAGTELGLKAKALMDHGKLV) are NMP. AMP contacts are provided by residues Thr31, Arg36, 57–59 (KLV), 85–88 (GFPR), and Gln92. The tract at residues 122–159 (GRRIHAPSGRVYHIKFNPPVVENKDDVTGEELTVRKDD) is LID. ATP is bound by residues Arg123 and 132–133 (VY). AMP contacts are provided by Arg156 and Arg167. Arg200 provides a ligand contact to ATP.

This sequence belongs to the adenylate kinase family. In terms of assembly, monomer.

Its subcellular location is the cytoplasm. It catalyses the reaction AMP + ATP = 2 ADP. It functions in the pathway purine metabolism; AMP biosynthesis via salvage pathway; AMP from ADP: step 1/1. Its function is as follows. Catalyzes the reversible transfer of the terminal phosphate group between ATP and AMP. Plays an important role in cellular energy homeostasis and in adenine nucleotide metabolism. This is Adenylate kinase from Photorhabdus laumondii subsp. laumondii (strain DSM 15139 / CIP 105565 / TT01) (Photorhabdus luminescens subsp. laumondii).